Consider the following 803-residue polypeptide: Integrin beta-1 (803 aa).

The first 24 residues, 1–24 (MAETNLTLLTWAGILCCLIWSGSA), serve as a signal peptide directing secretion. Glutamine 25 is subject to Blocked amino end (Gln). At 25–733 (QQGGSDCIKA…ETPECPSGPD (709 aa)) the chain is on the extracellular side. Residues 30 to 80 (DCIKANAKSCGECIQAGPNCGWCKKTDFLQEGEPTSARCDDLAALKSKGCP) form the PSI domain. Disulfide bonds link cysteine 31–cysteine 49, cysteine 39–cysteine 469, cysteine 42–cysteine 68, cysteine 52–cysteine 79, cysteine 211–cysteine 217, cysteine 265–cysteine 305, cysteine 405–cysteine 419, cysteine 439–cysteine 467, cysteine 471–cysteine 491, cysteine 482–cysteine 494, cysteine 496–cysteine 505, cysteine 507–cysteine 538, cysteine 521–cysteine 536, cysteine 530–cysteine 541, cysteine 543–cysteine 558, cysteine 560–cysteine 581, cysteine 565–cysteine 579, cysteine 573–cysteine 584, cysteine 586–cysteine 595, cysteine 597–cysteine 620, cysteine 604–cysteine 618, and cysteine 612–cysteine 623. Positions 144–382 (DYPIDLYYLM…QLIIDAYNSL (239 aa)) constitute a VWFA domain. Residues serine 156 and serine 158 each contribute to the Mg(2+) site. Residues serine 158, aspartate 161, aspartate 162, and glutamate 193 each coordinate Ca(2+). The CX3CL1-binding stretch occupies residues 211–217 (CTGDQNC). The N-linked (GlcNAc...) asparagine glycan is linked to asparagine 216. Ca(2+) is bound by residues asparagine 248, aspartate 250, proline 252, and glutamate 253. Glutamate 253 provides a ligand contact to Mg(2+). Asparagine 273 carries an N-linked (GlcNAc...) asparagine glycan. The CX3CL1-binding stretch occupies residues 299-318 (LPNDGKCHLENNMYTMSHYY). 6 N-linked (GlcNAc...) asparagine glycosylation sites follow: asparagine 367, asparagine 410, asparagine 421, asparagine 433, asparagine 445, and asparagine 486. An interaction with TMEM182 region spans residues 387–470 (ILENSKLPKE…IHLQFICDCL (84 aa)). I-EGF domains lie at 471–506 (CQSE…RLCE), 507–559 (CSTD…KYCE), 560–596 (CDNF…SACD), and 597–636 (CSLD…PTCE). Residue asparagine 525 is glycosylated (N-linked (GlcNAc...) asparagine). Residue asparagine 589 is glycosylated (N-linked (GlcNAc...) asparagine). Asparagine 624 carries an N-linked (GlcNAc...) asparagine glycan. Disulfide bonds link cysteine 625–cysteine 635, cysteine 638–cysteine 641, cysteine 645–cysteine 696, cysteine 651–cysteine 670, cysteine 654–cysteine 666, and cysteine 704–cysteine 728. Asparagine 674 is a glycosylation site (N-linked (GlcNAc...) asparagine). A helical transmembrane segment spans residues 734–756 (IIPIVAGVVAGIVLIGLALLLIW). Residues 757–803 (KLLMIIHDRREFAKFEKEKMNAKWDTGENPIYKSAVTTVVNPKYEGK) lie on the Cytoplasmic side of the membrane. Tyrosine 788 is subject to Phosphotyrosine; by Tyr-kinases.

The protein belongs to the integrin beta chain family. In terms of assembly, heterodimer of an alpha and a beta subunit. Beta-1 associates with either alpha-1, alpha-2, alpha-3, alpha-4, alpha-5, alpha-6, alpha-7, alpha-8, alpha-9, alpha-10, alpha-11 or alpha-V. Interacts with TMEM182 and LAMB1. As to expression, expressed on surface of embryonic fibroblasts (at protein level).

The protein resides in the cell membrane. It localises to the cell projection. The protein localises to the invadopodium membrane. Its subcellular location is the ruffle membrane. It is found in the melanosome. The protein resides in the lamellipodium. It localises to the ruffle. The protein localises to the cell junction. Its subcellular location is the focal adhesion. Integrins alpha-1/beta-1, alpha-2/beta-1, alpha-10/beta-1 and alpha-11/beta-1 are receptors for collagen. Integrins alpha-1/beta-1 and alpha-2/beta-1 recognize the proline-hydroxylated sequence G-F-P-G-E-R in collagen. Integrins alpha-2/beta-1, alpha-3/beta-1, alpha-4/beta-1, alpha-5/beta-1, alpha-8/beta-1, alpha-10/beta-1, alpha-11/beta-1 and alpha-V/beta-1 are receptors for fibronectin. Alpha-4/beta-1 recognizes one or more domains within the alternatively spliced CS-1 and CS-5 regions of fibronectin. Integrin alpha-5/beta-1 is a receptor for fibrinogen. Integrin alpha-1/beta-1, alpha-2/beta-1, alpha-6/beta-1 and alpha-7/beta-1 are receptors for lamimin. Integrin alpha-6/beta-1 (ITGA6:ITGB1) is present in oocytes and is involved in sperm-egg fusion. Integrin alpha-4/beta-1 is a receptor for VCAM1 and recognizes the sequence Q-I-D-S in VCAM1. Integrin alpha-9/beta-1 is a receptor for VCAM1, cytotactin and osteopontin. It recognizes the sequence A-E-I-D-G-I-E-L in cytotactin. Integrin alpha-3/beta-1 is a receptor for epiligrin, thrombospondin and CSPG4. Integrin alpha-3/beta-1 provides a docking site for FAP (seprase) at invadopodia plasma membranes in a collagen-dependent manner and hence may participate in the adhesion, formation of invadopodia and matrix degradation processes, promoting cell invasion. Alpha-3/beta-1 may mediate with LGALS3 the stimulation by CSPG4 of endothelial cells migration. Integrin alpha-V/beta-1 is a receptor for vitronectin. Beta-1 integrins recognize the sequence R-G-D in a wide array of ligands. When associated with alpha-7/beta-1 integrin, regulates cell adhesion and laminin matrix deposition. Involved in promoting endothelial cell motility and angiogenesis. Involved in osteoblast compaction through the fibronectin fibrillogenesis cell-mediated matrix assembly process and the formation of mineralized bone nodules. May be involved in up-regulation of the activity of kinases such as PKC via binding to KRT1. Together with KRT1 and RACK1, serves as a platform for SRC activation or inactivation. ITGA4:ITGB1 binds to fractalkine (CX3CL1) and may act as its coreceptor in CX3CR1-dependent fractalkine signaling. ITGA4:ITGB1 and ITGA5:ITGB1 bind to PLA2G2A via a site (site 2) which is distinct from the classical ligand-binding site (site 1) and this induces integrin conformational changes and enhanced ligand binding to site 1. ITGA5:ITGB1 acts as a receptor for fibrillin-1 (FBN1) and mediates R-G-D-dependent cell adhesion to FBN1. ITGA5:ITGB1 acts as a receptor for fibronectin FN1 and mediates R-G-D-dependent cell adhesion to FN1. ITGA5:ITGB1 is a receptor for IL1B and binding is essential for IL1B signaling. ITGA5:ITGB3 is a receptor for soluble CD40LG and is required for CD40/CD40LG signaling. Plays an important role in myoblast differentiation and fusion during skeletal myogenesis. In Gallus gallus (Chicken), this protein is Integrin beta-1 (ITGB1).